We begin with the raw amino-acid sequence, 697 residues long: MAR-binding filament-like protein 1 (697 aa).

The transit peptide at 1 to 41 directs the protein to the chloroplast; the sequence is MATSCFPPFSASSSSLCSSQFTPLLSCPRNTQICRKKRPVM. The transit peptide at 42–79 directs the protein to the thylakoid; that stretch reads ASMHSENQKESNVCNRRSILFVGFSVLPLLNLRARALE. Residues 80-106 are Lumenal, thylakoid-facing; it reads GLSTDSQAQPQKEETEQTIQGSAGNPF. A disordered region spans residues 81-100; that stretch reads LSTDSQAQPQKEETEQTIQG. The helical transmembrane segment at 107–127 threads the bilayer; it reads VSLLNGLGVVGSGVLGSLYAL. At 128-697 the chain is on the stromal side; sequence ARNEKAVSDA…GEKEKVNVQQ (570 aa). The stretch at 203 to 671 forms a coiled coil; it reads LQNEKKLAED…KGEILRLRSQ (469 aa). The disordered stretch occupies residues 599–629; the sequence is TSRNSSLEDEREVHRQSVSEQKQISQEAQEN. The segment covering 604–615 has biased composition (basic and acidic residues); that stretch reads SLEDEREVHRQS. Positions 616 to 627 are enriched in polar residues; sequence VSEQKQISQEAQ.

As to quaternary structure, interacts with MAF1. Interacts with PTST2; the interaction is essential for the initiation of starch granules biosynthesis in leaf chloroplasts, for the correct location of the process in the stromal spaces between the thylakoid membranes, and for the association of PTST2 with the thylakoid membranes. Phosphorylated in vitro by human casein kinase II. Post-translationally, predicted to be translocated into the thylakoid by the Tat system.

Its subcellular location is the plastid. It is found in the chloroplast. The protein resides in the chloroplast thylakoid membrane. It localises to the chloroplast stroma. The protein localises to the chloroplast nucleoid. Its subcellular location is the nucleus. It is found in the nucleus matrix. In terms of biological role, required for the initiation of starch granules biosynthesis in leaf chloroplasts. Anchored to the thylakoid membranes with its C-terminus facing into the stroma where it is essential for localizing PTST2 and SS4 to the stromal spaces between the thylakoid membranes in order to begin starch granule formation. Associated with leaf chloroplastic nucleoids in vivo. Binds to various chloroplastic double-stranded DNA fragments without particular sequence specificity in vitro. May function at the interface between nucleoids and thylakoids possibly by anchoring nucleoids to the thylakoid membrane system in mature chloroplasts. Binds nuclear DNA. Interacts with chromatin via matrix attachment regions (MARs). Likely to participate in nuclear architecture by connecting chromatin with the nuclear matrix and potentially with the nuclear envelope. In Solanum lycopersicum (Tomato), this protein is MAR-binding filament-like protein 1.